The chain runs to 105 residues: Putative membrane protein insertion efficiency factor (105 aa).

It belongs to the UPF0161 family.

Its subcellular location is the cell membrane. Could be involved in insertion of integral membrane proteins into the membrane. This Bifidobacterium longum subsp. infantis (strain ATCC 15697 / DSM 20088 / JCM 1222 / NCTC 11817 / S12) protein is Putative membrane protein insertion efficiency factor.